Consider the following 267-residue polypeptide: MSVRVAIAGVSGRMGRALLEAVAADDGCALYAALDRPGSSLVGQDAGAAWGAANGVTVTDQAQAALKGAQVLVDFTRPEATFGYLEACALDGVPVVIGTTGFDEAGRARIAAAAERVPVVFAPNMSVGVNLLMKLAEVAAEVLQDGYDIEIIEAHHRHKVDAPSGTALGLGQAVARASGRDLEACAVYGREGVTGERDPRTIGFATVRGGDIVGDHTLLFAGVGERVELTHKASSRATFAQGALRAAKWVQGRAPGLYDMRDVLGLK.

NAD(+) contacts are provided by residues 9 to 14 (GVSGRM) and D35. R36 is a binding site for NADP(+). Residues 98–100 (GTT) and 122–125 (APNM) contribute to the NAD(+) site. H155 acts as the Proton donor/acceptor in catalysis. Position 156 (H156) interacts with (S)-2,3,4,5-tetrahydrodipicolinate. Residue K159 is the Proton donor of the active site. 165-166 (GT) provides a ligand contact to (S)-2,3,4,5-tetrahydrodipicolinate.

Belongs to the DapB family.

Its subcellular location is the cytoplasm. It carries out the reaction (S)-2,3,4,5-tetrahydrodipicolinate + NAD(+) + H2O = (2S,4S)-4-hydroxy-2,3,4,5-tetrahydrodipicolinate + NADH + H(+). It catalyses the reaction (S)-2,3,4,5-tetrahydrodipicolinate + NADP(+) + H2O = (2S,4S)-4-hydroxy-2,3,4,5-tetrahydrodipicolinate + NADPH + H(+). Its pathway is amino-acid biosynthesis; L-lysine biosynthesis via DAP pathway; (S)-tetrahydrodipicolinate from L-aspartate: step 4/4. Catalyzes the conversion of 4-hydroxy-tetrahydrodipicolinate (HTPA) to tetrahydrodipicolinate. The sequence is that of 4-hydroxy-tetrahydrodipicolinate reductase from Thiobacillus denitrificans (strain ATCC 25259 / T1).